Here is a 262-residue protein sequence, read N- to C-terminus: Pyridoxine 5'-phosphate synthase (262 aa).

N6 contributes to the 3-amino-2-oxopropyl phosphate binding site. 1-deoxy-D-xylulose 5-phosphate is bound at residue 8–9; that stretch reads DH. Position 17 (R17) interacts with 3-amino-2-oxopropyl phosphate. The active-site Proton acceptor is H43. 1-deoxy-D-xylulose 5-phosphate-binding residues include R45 and H50. Residue E70 is the Proton acceptor of the active site. T102 is a binding site for 1-deoxy-D-xylulose 5-phosphate. The Proton donor role is filled by H215. 3-amino-2-oxopropyl phosphate contacts are provided by residues G216 and 237-238; that span reads GH.

Belongs to the PNP synthase family. Homooctamer; tetramer of dimers.

Its subcellular location is the cytoplasm. The enzyme catalyses 3-amino-2-oxopropyl phosphate + 1-deoxy-D-xylulose 5-phosphate = pyridoxine 5'-phosphate + phosphate + 2 H2O + H(+). It participates in cofactor biosynthesis; pyridoxine 5'-phosphate biosynthesis; pyridoxine 5'-phosphate from D-erythrose 4-phosphate: step 5/5. Its function is as follows. Catalyzes the complicated ring closure reaction between the two acyclic compounds 1-deoxy-D-xylulose-5-phosphate (DXP) and 3-amino-2-oxopropyl phosphate (1-amino-acetone-3-phosphate or AAP) to form pyridoxine 5'-phosphate (PNP) and inorganic phosphate. This is Pyridoxine 5'-phosphate synthase from Helicobacter pylori (strain ATCC 700392 / 26695) (Campylobacter pylori).